The primary structure comprises 369 residues: Putative 2-aminoethylphosphonate import ATP-binding protein PhnT (369 aa).

The ABC transporter domain maps to 19–250; it reads IVLDSLRVAY…PPNRFAAEFL (232 aa). 51–58 lines the ATP pocket; it reads GPSGSGKT.

It belongs to the ABC transporter superfamily. 2-aminoethylphosphonate importer (TC 3.A.1.11.5) family.

The protein localises to the cell inner membrane. Probably part of the PhnSTUV complex (TC 3.A.1.11.5) involved in 2-aminoethylphosphonate import. Probably responsible for energy coupling to the transport system. This chain is Putative 2-aminoethylphosphonate import ATP-binding protein PhnT (phnT), found in Salmonella typhimurium (strain LT2 / SGSC1412 / ATCC 700720).